The following is a 147-amino-acid chain: Deoxyuridine 5'-triphosphate nucleotidohydrolase (147 aa).

Residues 67–69 (RSG), Asn-80, and 84–86 (TID) contribute to the substrate site.

It belongs to the dUTPase family. The cofactor is Mg(2+).

It carries out the reaction dUTP + H2O = dUMP + diphosphate + H(+). It functions in the pathway pyrimidine metabolism; dUMP biosynthesis; dUMP from dCTP (dUTP route): step 2/2. Functionally, this enzyme is involved in nucleotide metabolism: it produces dUMP, the immediate precursor of thymidine nucleotides and it decreases the intracellular concentration of dUTP so that uracil cannot be incorporated into DNA. The sequence is that of Deoxyuridine 5'-triphosphate nucleotidohydrolase from Anaeromyxobacter dehalogenans (strain 2CP-C).